Reading from the N-terminus, the 286-residue chain is Glycine--tRNA ligase alpha subunit (286 aa).

It belongs to the class-II aminoacyl-tRNA synthetase family. As to quaternary structure, tetramer of two alpha and two beta subunits.

It is found in the cytoplasm. The catalysed reaction is tRNA(Gly) + glycine + ATP = glycyl-tRNA(Gly) + AMP + diphosphate. The polypeptide is Glycine--tRNA ligase alpha subunit (Thermotoga neapolitana (strain ATCC 49049 / DSM 4359 / NBRC 107923 / NS-E)).